A 318-amino-acid chain; its full sequence is Esterase FVEG_12639 (318 aa).

Residues S156, D255, and H285 contribute to the active site.

This sequence belongs to the AB hydrolase 3 family.

In terms of biological role, esterase; part of the Fusarium detoxification of benzoxazolinone cluster 2 (FDB2) involved in the degradation of benzoxazolinones produced by the host plant. Maize, wheat, and rye produce the 2 benzoxazinone phytoanticipins 2,4-dihy-droxy-7-methoxy-1,4-benzoxazin-3-one (DIMBOA) and 2,4-dihydroxy-1,4-benzoxazin-3-one (DIBOA) that, due to their inherent instability once released, spontaneously degrade to the more stable corresponding benzoxazolinones, 6-methoxy-2-benzoxazolinone (MBOA) and 2-benzoxazolinone (BOA), respectively. The first step in the detoxification of benzoxazolinones involves the hydrolysis of the cyclic ester bond of benzoxazolinones by the FDB1 cluster gamma-lactamase MBL1 to aminophenols. MBL1 is able to convert BOA into 2-aminophenol (2-AP), as well as MBOA into 5-methoxy-2-aminophenol (2-AMP). The FDB2 cluster N-malonyltransferase FDB2/NAT1 then metabolizes aminophenols via N-malonylation to non-toxic malonamic acids. FDB2/NAT1 converts 2-AP into N-(2-hydroxyphenyl) malonamic acid (HPMA) and 2-AMP into N-(2-hydroxy-4-methoxyphenyl) malonamic acid (HMPMA). The duplicated dienlactone hydrolases DLH1 and DLH2 may provide redundant function for hydrolyzing the lactone moiety in the BOA molecule. The roles of the amidases an other enzymes encoded by the 2 FDB clusters have not been identified so far. The protein is Esterase FVEG_12639 of Gibberella moniliformis (strain M3125 / FGSC 7600) (Maize ear and stalk rot fungus).